The following is a 413-amino-acid chain: Glucose-1-phosphate adenylyltransferase (413 aa).

Alpha-D-glucose 1-phosphate contacts are provided by residues glycine 169, 184-185, and serine 201; that span reads EK.

Belongs to the bacterial/plant glucose-1-phosphate adenylyltransferase family. In terms of assembly, homotetramer.

It carries out the reaction alpha-D-glucose 1-phosphate + ATP + H(+) = ADP-alpha-D-glucose + diphosphate. It functions in the pathway glycan biosynthesis; glycogen biosynthesis. Involved in the biosynthesis of ADP-glucose, a building block required for the elongation reactions to produce glycogen. Catalyzes the reaction between ATP and alpha-D-glucose 1-phosphate (G1P) to produce pyrophosphate and ADP-Glc. In Trichlorobacter lovleyi (strain ATCC BAA-1151 / DSM 17278 / SZ) (Geobacter lovleyi), this protein is Glucose-1-phosphate adenylyltransferase.